The primary structure comprises 161 residues: Ribosome maturation factor RimP (161 aa).

This sequence belongs to the RimP family.

The protein localises to the cytoplasm. Required for maturation of 30S ribosomal subunits. This Rickettsia felis (strain ATCC VR-1525 / URRWXCal2) (Rickettsia azadi) protein is Ribosome maturation factor RimP.